Here is a 671-residue protein sequence, read N- to C-terminus: MESIEQQLTELRTTLRHHEYLYHVMDAPEIPDVEYDRLMRELRELETKHPELITPDSPTQRVGAAPLAAFSQIRHEVPMLSLDNVFDEESFLAFNKRVQDRLKSNEKVTWCCELKLDGLAVSILYENGVLVSAATRGDGTTGEDITSNVRTIRAIPLKLHGENIPARLEVRGEVFLPQAGFEKINEDARRTGGKVFANPRNAAAGSLRQLDPRITAKRPLTFFCYGVGVLEGGELPDTHLGRLLQFKQWGLPVSDRVTLCESAEEVLAFYHKVEEDRPTLGFDIDGVVIKVNSLAQQERLGFVARAPRWAVAFKFPAQEQMTFVRDVEFQVGRTGAITPVARLEPVHVAGVLVSNATLHNADEIERLGLRIGDKVVIRRAGDVIPQVVNVVLSERPEDTREVVFPTHCPVCGSDVERVEGEAVARCTGGLICGAQRKESLKHFVSRRAMDVDGMGDKIIDQLVEKEYVHTPADLFKLTAGKLTGLERMGPKSAQNVVNALEKAKETTFARFLYALGIREVGEATAAGLAAYFGTLEALEAASIEELQKVPDVGIVVASHVHNFFAEESNRNVISELLAEGVHWPAPIVINAEEIDSPFAGKTVVLTGSLSQMSRDDAKARLVELGAKVAGSVSKKTDLVIAGEAAGSKLAKAQELGIEVIDEAEMLRLLGS.

NAD(+) contacts are provided by residues 32 to 36 (DVEYD), 81 to 82 (SL), and glutamate 113. Lysine 115 acts as the N6-AMP-lysine intermediate in catalysis. Residues arginine 136, glutamate 173, lysine 290, and lysine 314 each coordinate NAD(+). Residues cysteine 408, cysteine 411, cysteine 426, and cysteine 432 each coordinate Zn(2+). Residues 593 to 671 (EIDSPFAGKT…EAEMLRLLGS (79 aa)) enclose the BRCT domain.

This sequence belongs to the NAD-dependent DNA ligase family. LigA subfamily. The cofactor is Mg(2+). It depends on Mn(2+) as a cofactor.

It carries out the reaction NAD(+) + (deoxyribonucleotide)n-3'-hydroxyl + 5'-phospho-(deoxyribonucleotide)m = (deoxyribonucleotide)n+m + AMP + beta-nicotinamide D-nucleotide.. In terms of biological role, DNA ligase that catalyzes the formation of phosphodiester linkages between 5'-phosphoryl and 3'-hydroxyl groups in double-stranded DNA using NAD as a coenzyme and as the energy source for the reaction. It is essential for DNA replication and repair of damaged DNA. This Escherichia coli O17:K52:H18 (strain UMN026 / ExPEC) protein is DNA ligase.